The chain runs to 278 residues: Deoxyribonuclease-1-like 2 (278 aa).

The N-terminal stretch at 1–21 (MGWPWAPLTAVWALGVMGATA) is a signal peptide. Residues E99 and H150 contribute to the active site. An intrachain disulfide couples C189 to C225.

This sequence belongs to the DNase I family. It depends on Mg(2+) as a cofactor. Ca(2+) serves as cofactor.

Its subcellular location is the cytoplasm. It is found in the secreted. Functionally, divalent cation-dependent acid DNA endonuclease involved in the breakdown of the nucleus during corneocyte formation of epidermal keratinocytes. May play an immune role by eliminating harmful DNA released into the extracellular environment by damaged epidermal cells. This is Deoxyribonuclease-1-like 2 (Dnase1l2) from Mus musculus (Mouse).